A 320-amino-acid polypeptide reads, in one-letter code: Thioredoxin reductase (320 aa).

Residue 36–43 (TGMEQGGQ) coordinates FAD. Cysteines 136 and 139 form a disulfide. FAD is bound at residue 287–296 (DVTDHVYRQA).

Belongs to the class-II pyridine nucleotide-disulfide oxidoreductase family. As to quaternary structure, homodimer. The cofactor is FAD.

Its subcellular location is the cytoplasm. It carries out the reaction [thioredoxin]-dithiol + NADP(+) = [thioredoxin]-disulfide + NADPH + H(+). This is Thioredoxin reductase (trxB) from Coxiella burnetii (strain RSA 493 / Nine Mile phase I).